The chain runs to 282 residues: Pantothenate synthetase (282 aa).

An ATP-binding site is contributed by 30-37 (MGYLHEGH). Catalysis depends on His-37, which acts as the Proton donor. Gln-61 contacts (R)-pantoate. Gln-61 is a beta-alanine binding site. 147 to 150 (GMKD) contacts ATP. Gln-153 contacts (R)-pantoate. ATP-binding positions include Val-176 and 184–187 (KSSR).

It belongs to the pantothenate synthetase family. Homodimer.

It localises to the cytoplasm. It carries out the reaction (R)-pantoate + beta-alanine + ATP = (R)-pantothenate + AMP + diphosphate + H(+). The protein operates within cofactor biosynthesis; (R)-pantothenate biosynthesis; (R)-pantothenate from (R)-pantoate and beta-alanine: step 1/1. Functionally, catalyzes the condensation of pantoate with beta-alanine in an ATP-dependent reaction via a pantoyl-adenylate intermediate. This Bacillus mycoides (strain KBAB4) (Bacillus weihenstephanensis) protein is Pantothenate synthetase.